Consider the following 139-residue polypeptide: Ribosomal RNA large subunit methyltransferase H (139 aa).

S-adenosyl-L-methionine contacts are provided by residues Leu57, Gly88, and 107–112 (LSAMTF).

It belongs to the RNA methyltransferase RlmH family. Homodimer.

It is found in the cytoplasm. The enzyme catalyses pseudouridine(1915) in 23S rRNA + S-adenosyl-L-methionine = N(3)-methylpseudouridine(1915) in 23S rRNA + S-adenosyl-L-homocysteine + H(+). In terms of biological role, specifically methylates the pseudouridine at position 1915 (m3Psi1915) in 23S rRNA. In Solibacter usitatus (strain Ellin6076), this protein is Ribosomal RNA large subunit methyltransferase H.